The primary structure comprises 251 residues: Probable transcriptional regulatory protein RSal33209_2002 (251 aa).

The protein belongs to the TACO1 family.

Its subcellular location is the cytoplasm. The sequence is that of Probable transcriptional regulatory protein RSal33209_2002 from Renibacterium salmoninarum (strain ATCC 33209 / DSM 20767 / JCM 11484 / NBRC 15589 / NCIMB 2235).